A 126-amino-acid chain; its full sequence is Large ribosomal subunit protein uL22 (126 aa).

The protein belongs to the universal ribosomal protein uL22 family. As to quaternary structure, part of the 50S ribosomal subunit.

Its function is as follows. This protein binds specifically to 23S rRNA; its binding is stimulated by other ribosomal proteins, e.g. L4, L17, and L20. It is important during the early stages of 50S assembly. It makes multiple contacts with different domains of the 23S rRNA in the assembled 50S subunit and ribosome. In terms of biological role, the globular domain of the protein is located near the polypeptide exit tunnel on the outside of the subunit, while an extended beta-hairpin is found that lines the wall of the exit tunnel in the center of the 70S ribosome. This chain is Large ribosomal subunit protein uL22, found in Cereibacter sphaeroides (strain ATCC 17029 / ATH 2.4.9) (Rhodobacter sphaeroides).